A 380-amino-acid polypeptide reads, in one-letter code: Succinate--CoA ligase [ADP-forming] subunit beta (380 aa).

Residues 9 to 237 form the ATP-grasp domain; it reads RDLLARFGIP…PSAEPEAERR (229 aa). ATP-binding positions include K45, 52–54, V94, and E99; that span reads GRG. Positions 192 and 206 each coordinate Mg(2+). Substrate-binding positions include N257 and 314–316; that span reads GIT.

It belongs to the succinate/malate CoA ligase beta subunit family. In terms of assembly, heterotetramer of two alpha and two beta subunits. Mg(2+) serves as cofactor.

It catalyses the reaction succinate + ATP + CoA = succinyl-CoA + ADP + phosphate. The catalysed reaction is GTP + succinate + CoA = succinyl-CoA + GDP + phosphate. It functions in the pathway carbohydrate metabolism; tricarboxylic acid cycle; succinate from succinyl-CoA (ligase route): step 1/1. In terms of biological role, succinyl-CoA synthetase functions in the citric acid cycle (TCA), coupling the hydrolysis of succinyl-CoA to the synthesis of either ATP or GTP and thus represents the only step of substrate-level phosphorylation in the TCA. The beta subunit provides nucleotide specificity of the enzyme and binds the substrate succinate, while the binding sites for coenzyme A and phosphate are found in the alpha subunit. The sequence is that of Succinate--CoA ligase [ADP-forming] subunit beta from Chloroflexus aurantiacus (strain ATCC 29366 / DSM 635 / J-10-fl).